A 191-amino-acid chain; its full sequence is Holliday junction branch migration complex subunit RuvA (191 aa).

The segment at 1 to 64 (MIGTLSGIIE…DNVPQLYGFT (64 aa)) is domain I. The tract at residues 65-145 (DTEEQNCLKM…FNIMDKRGPS (81 aa)) is domain II. Positions 146-149 (VEDS) are flexible linker. Positions 149-191 (SDALSALLSLGYEKTRVLNALEKVGVSHNLSDTVRFALKELSK) are domain III.

This sequence belongs to the RuvA family. Homotetramer. Forms an RuvA(8)-RuvB(12)-Holliday junction (HJ) complex. HJ DNA is sandwiched between 2 RuvA tetramers; dsDNA enters through RuvA and exits via RuvB. An RuvB hexamer assembles on each DNA strand where it exits the tetramer. Each RuvB hexamer is contacted by two RuvA subunits (via domain III) on 2 adjacent RuvB subunits; this complex drives branch migration. In the full resolvosome a probable DNA-RuvA(4)-RuvB(12)-RuvC(2) complex forms which resolves the HJ.

It is found in the cytoplasm. Its function is as follows. The RuvA-RuvB-RuvC complex processes Holliday junction (HJ) DNA during genetic recombination and DNA repair, while the RuvA-RuvB complex plays an important role in the rescue of blocked DNA replication forks via replication fork reversal (RFR). RuvA specifically binds to HJ cruciform DNA, conferring on it an open structure. The RuvB hexamer acts as an ATP-dependent pump, pulling dsDNA into and through the RuvAB complex. HJ branch migration allows RuvC to scan DNA until it finds its consensus sequence, where it cleaves and resolves the cruciform DNA. The chain is Holliday junction branch migration complex subunit RuvA from Anaplasma phagocytophilum (strain HZ).